We begin with the raw amino-acid sequence, 395 residues long: Elongation factor Tu (395 aa).

A tr-type G domain is found at 10-204 (KPHVNIGTIG…EVDAYIPTPE (195 aa)). The tract at residues 19-26 (GHVDHGKT) is G1. Residue 19–26 (GHVDHGKT) coordinates GTP. Mg(2+) is bound at residue threonine 26. The segment at 60–64 (GITIS) is G2. Positions 81 to 84 (DCPG) are G3. Residues 81 to 85 (DCPGH) and 136 to 139 (NKCD) each bind GTP. The tract at residues 136–139 (NKCD) is G4. A G5 region spans residues 174 to 176 (SAL).

The protein belongs to the TRAFAC class translation factor GTPase superfamily. Classic translation factor GTPase family. EF-Tu/EF-1A subfamily. In terms of assembly, monomer.

Its subcellular location is the cytoplasm. It carries out the reaction GTP + H2O = GDP + phosphate + H(+). GTP hydrolase that promotes the GTP-dependent binding of aminoacyl-tRNA to the A-site of ribosomes during protein biosynthesis. The polypeptide is Elongation factor Tu (Bacillus cereus (strain G9842)).